Here is a 285-residue protein sequence, read N- to C-terminus: MNVKENPYLKYLRRDRLPHIFCAGCGNGIVLNTFFKGMEMAGVDFDSIAMVSGIGCSSRIPGYVKCDSLHTTHGRPIAFATGLKLANPSLNVVVFTGDGDAAAIGGNHLIHGARKNIDLTVICINNSIYGMTGGQISPTSPEGSFGTTAPYGALEDPFDLSELVRAAGASYVARWTAAHPLQLANSIKKGLKNRGFSFIEAVSQCPTYFGRKNRMRSPVEMMKFMKENSINRRKALKMDPEEVEGKLIIGEFADAPRPELCDRIYGMIEEKSGKIDIIKSAYRDD.

As to quaternary structure, heterotetramer of the KorA, KorB, KorC and KorD subunits.

It catalyses the reaction 2 oxidized [2Fe-2S]-[ferredoxin] + 2-oxoglutarate + CoA = succinyl-CoA + 2 reduced [2Fe-2S]-[ferredoxin] + CO2 + H(+). This is 2-oxoglutarate synthase subunit KorB (korB) from Methanothermobacter marburgensis (strain ATCC BAA-927 / DSM 2133 / JCM 14651 / NBRC 100331 / OCM 82 / Marburg) (Methanobacterium thermoautotrophicum).